The following is a 355-amino-acid chain: UPF0324 membrane protein PA5383 (355 aa).

Helical transmembrane passes span 20–37 (IPGLLLSAALAGVAILLG), 44–66 (HNGISALTLAIVLGILVGNTLYP), 71–93 (GSAAGVGFSKQILLRAGIILYGL), 100–122 (IAGVGLHGVLLDALMLASTFGLA), 137–159 (TLLIGAGSSICGAAAVMATEPVV), 166–188 (VAVAVSTVVVFGTLGIFLYPALF), 233–255 (AVIAKMVRVMMLAPFLILLSAWL), 275–297 (WFAVGFVLVAGLNSLVSLPPALV), 307–324 (LLAMAMAGLGLGTHLSAI), and 331–353 (PLLLAALLFAWLVLGGGFLTRLA).

This sequence belongs to the UPF0324 family.

It localises to the cell membrane. This chain is UPF0324 membrane protein PA5383, found in Pseudomonas aeruginosa (strain ATCC 15692 / DSM 22644 / CIP 104116 / JCM 14847 / LMG 12228 / 1C / PRS 101 / PAO1).